The sequence spans 290 residues: uncharacterized protein (290 aa).

7 consecutive transmembrane segments (helical) span residues 40-60 (MHVILLSALFYQIINILSPVI), 80-100 (DAHVVSSVQSIVLICLGYTCL), 110-130 (LFGYSVVAGDIYALTAGYFVW), 139-159 (VHITGIGFVIHAIAALFVITF), 166-188 (MYYGPTYLSWELSTPFLNIHYFL), 200-220 (MINGFILIVTFICVRIAWGWF), and 238-260 (WALSLFYLAANMSLNCLNLFWVS). A TLC domain is found at 74–271 (KTRLNWDAHV…MIDAIRRRAH (198 aa)).

Its subcellular location is the endoplasmic reticulum membrane. This is an uncharacterized protein from Schizosaccharomyces pombe (strain 972 / ATCC 24843) (Fission yeast).